The following is a 159-amino-acid chain: Ribosomal RNA large subunit methyltransferase H (159 aa).

S-adenosyl-L-methionine contacts are provided by residues Leu76, Gly108, and 127 to 132 (FGKLTL).

Belongs to the RNA methyltransferase RlmH family. In terms of assembly, homodimer.

It is found in the cytoplasm. The enzyme catalyses pseudouridine(1915) in 23S rRNA + S-adenosyl-L-methionine = N(3)-methylpseudouridine(1915) in 23S rRNA + S-adenosyl-L-homocysteine + H(+). Functionally, specifically methylates the pseudouridine at position 1915 (m3Psi1915) in 23S rRNA. The polypeptide is Ribosomal RNA large subunit methyltransferase H (Latilactobacillus sakei subsp. sakei (strain 23K) (Lactobacillus sakei subsp. sakei)).